Here is a 721-residue protein sequence, read N- to C-terminus: Catalase-peroxidase 1 (721 aa).

Residues 98-226 constitute a cross-link (tryptophyl-tyrosyl-methioninium (Trp-Tyr) (with M-252)); that stretch reads WHAAGTYRIA…LAAVMMGLIY (129 aa). Histidine 99 (proton acceptor) is an active-site residue. A cross-link (tryptophyl-tyrosyl-methioninium (Tyr-Met) (with W-98)) is located at residues 226–252; sequence YVNPEGVDGQPDPLKTAHDVRVTFARM. Histidine 267 contributes to the heme b binding site.

It belongs to the peroxidase family. Peroxidase/catalase subfamily. Homodimer or homotetramer. Requires heme b as cofactor. Post-translationally, formation of the three residue Trp-Tyr-Met cross-link is important for the catalase, but not the peroxidase activity of the enzyme.

It carries out the reaction H2O2 + AH2 = A + 2 H2O. The catalysed reaction is 2 H2O2 = O2 + 2 H2O. Functionally, bifunctional enzyme with both catalase and broad-spectrum peroxidase activity. The polypeptide is Catalase-peroxidase 1 (Vibrio parahaemolyticus serotype O3:K6 (strain RIMD 2210633)).